A 64-amino-acid chain; its full sequence is Large ribosomal subunit protein uL30 (64 aa).

The protein belongs to the universal ribosomal protein uL30 family. Part of the 50S ribosomal subunit.

This is Large ribosomal subunit protein uL30 from Rhodopseudomonas palustris (strain BisA53).